Reading from the N-terminus, the 738-residue chain is Prolyl oligopeptidase A (738 aa).

Residues Ser581, Asp665, and His701 each act as charge relay system in the active site.

Belongs to the peptidase S9A family. In terms of assembly, monomer.

The enzyme catalyses Hydrolysis of Pro-|-Xaa &gt;&gt; Ala-|-Xaa in oligopeptides.. Functionally, housekeeping prolyl oligopeptidase (POP) that behaves like a conventional POP by cleaving peptide bonds on the C-terminal side of prolyl residues within peptides that are up to approximately 30 amino acids long. The chain is Prolyl oligopeptidase A from Galerina marginata (strain CBS 339.88).